We begin with the raw amino-acid sequence, 179 residues long: MASHIGKLPIAIPAGVEVKIEGQNFSAKGAKGSDSYVVPEGITAAVEGNEIVLTAADDLRPTRAKHGLARSIMAGMVKGVHDGYSKTLEIVGTGYRAVAKGKGIEFFLGYSHTITVNPPEGITLKVTDANHVVVEGTDKQVVGQVAANIRKLRAPEPYKGKGIKYADERILRKAGKAGK.

The protein belongs to the universal ribosomal protein uL6 family. As to quaternary structure, part of the 50S ribosomal subunit.

Its function is as follows. This protein binds to the 23S rRNA, and is important in its secondary structure. It is located near the subunit interface in the base of the L7/L12 stalk, and near the tRNA binding site of the peptidyltransferase center. In Bifidobacterium longum subsp. infantis (strain ATCC 15697 / DSM 20088 / JCM 1222 / NCTC 11817 / S12), this protein is Large ribosomal subunit protein uL6.